A 392-amino-acid chain; its full sequence is 1-deoxy-D-xylulose 5-phosphate reductoisomerase (392 aa).

Residues Thr10, Gly11, Ser12, Ile13, Asn38, and Asn124 each contribute to the NADPH site. Lys125 serves as a coordination point for 1-deoxy-D-xylulose 5-phosphate. Glu126 serves as a coordination point for NADPH. Mn(2+) is bound at residue Asp150. 1-deoxy-D-xylulose 5-phosphate-binding residues include Ser151, Glu152, Ser176, and His199. Residue Glu152 participates in Mn(2+) binding. Gly205 contacts NADPH. Ser212, Asn217, Lys218, and Glu221 together coordinate 1-deoxy-D-xylulose 5-phosphate. Mn(2+) is bound at residue Glu221.

This sequence belongs to the DXR family. Mg(2+) serves as cofactor. Mn(2+) is required as a cofactor.

It carries out the reaction 2-C-methyl-D-erythritol 4-phosphate + NADP(+) = 1-deoxy-D-xylulose 5-phosphate + NADPH + H(+). Its pathway is isoprenoid biosynthesis; isopentenyl diphosphate biosynthesis via DXP pathway; isopentenyl diphosphate from 1-deoxy-D-xylulose 5-phosphate: step 1/6. In terms of biological role, catalyzes the NADPH-dependent rearrangement and reduction of 1-deoxy-D-xylulose-5-phosphate (DXP) to 2-C-methyl-D-erythritol 4-phosphate (MEP). This is 1-deoxy-D-xylulose 5-phosphate reductoisomerase from Gloeobacter violaceus (strain ATCC 29082 / PCC 7421).